Here is a 457-residue protein sequence, read N- to C-terminus: Solute carrier family 38 member 6 (457 aa).

Residue Met1 is modified to N-acetylmethionine. Ser4 and Ser7 each carry phosphoserine. 5 helical membrane passes run 48-68 (FGLS…LGLA), 70-90 (VMAN…ALLA), 112-132 (LGLF…IIIQ), 171-191 (LLII…KIGF), and 192-212 (LGYT…VVVI). Cys219 and Cys239 are joined by a disulfide. N-linked (GlcNAc...) asparagine glycosylation is present at Asn234. Residues 251–271 (VYAIPTMAFSFLCHTSVLPIY) traverse the membrane as a helical segment. An N-linked (GlcNAc...) asparagine glycan is attached at Asn284. 5 helical membrane passes run 289 to 309 (AIAL…LTFY), 328 to 348 (AAVM…VPLI), 372 to 392 (SLTT…VPDI), 395 to 415 (VFGV…PGLF), and 432 to 452 (ALSL…LIIL).

It belongs to the amino acid/polyamine transporter 2 family.

The protein resides in the cell membrane. The protein localises to the synapse. It catalyses the reaction L-glutamine(out) = L-glutamine(in). The catalysed reaction is L-glutamate(out) = L-glutamate(in). Its function is as follows. Amino acid transporter with an apparent selectivity for L-glutamine and L-glutamate. May facilitate glutamine uptake in excitatory neurons. The transport mechanism remains to be elucidated. This Rattus norvegicus (Rat) protein is Solute carrier family 38 member 6.